A 327-amino-acid chain; its full sequence is Interleukin-12 subunit beta (327 aa).

Positions 1 to 22 are cleaved as a signal peptide; the sequence is MHPQQLVVSWFSLVLLASPIVA. The Ig-like C2-type domain occupies 23-106; the sequence is IWELEKNVYI…LSRSLLLLHK (84 aa). A disulfide bond links cysteine 50 and cysteine 90. A glycan (N-linked (GlcNAc...) asparagine) is linked at asparagine 223. The region spanning 238 to 327 is the Fibronectin type-III domain; that stretch reads PPKNLQLRPL…WSEWASVSCS (90 aa).

It belongs to the IL-12B family. As to quaternary structure, heterodimer with IL12A; disulfide-linked. The heterodimer is known as interleukin IL-12. Heterodimer with IL23A; disulfide-linked. The heterodimer is known as interleukin IL-23. Also secreted as a monomer. Interacts with NBR1; this interaction promotes IL-12 secretion.

Its subcellular location is the secreted. In terms of biological role, cytokine that can act as a growth factor for activated T and NK cells, enhance the lytic activity of NK/lymphokine-activated killer cells, and stimulate the production of IFN-gamma by resting PBMC. The sequence is that of Interleukin-12 subunit beta (IL12B) from Bubalus carabanensis (Swamp type water buffalo).